The following is a 652-amino-acid chain: Na(+)/H(+) antiporter NhaA 3 (652 aa).

The na(+)/H(+) antiporter NhaA stretch occupies residues methionine 1–phenylalanine 428. Helical transmembrane passes span glutamate 32–leucine 52, leucine 78–valine 98, methionine 114–phenylalanine 134, valine 142–leucine 162, phenylalanine 173–tyrosine 193, methionine 200–valine 220, leucine 227–leucine 249, histidine 306–valine 326, glycine 342–valine 362, tryptophan 376–isoleucine 396, and valine 411–alanine 431. Residues arginine 429 to alanine 623 enclose the Thioredoxin domain. The interval arginine 626–threonine 652 is disordered. Basic and acidic residues predominate over residues leucine 627–alanine 641.

This sequence in the N-terminal section; belongs to the NhaA Na(+)/H(+) (TC 2.A.33) antiporter family.

The protein localises to the cell membrane. The enzyme catalyses Na(+)(in) + 2 H(+)(out) = Na(+)(out) + 2 H(+)(in). In terms of biological role, na(+)/H(+) antiporter that extrudes sodium in exchange for external protons. In Salinispora tropica (strain ATCC BAA-916 / DSM 44818 / JCM 13857 / NBRC 105044 / CNB-440), this protein is Na(+)/H(+) antiporter NhaA 3.